The primary structure comprises 145 residues: Snaclec salmorin subunit B (145 aa).

The first 23 residues, 1–23, serve as a signal peptide directing secretion; it reads MGRFIFVSFGLLVVFVSLSGTGA. 3 disulfides stabilise this stretch: Cys25–Cys36, Cys53–Cys141, and Cys118–Cys133. Residues 32–142 form the C-type lectin domain; that stretch reads YEGHCYKLFN…CRMEAYFVCE (111 aa). Residues Ser64 and Glu70 each coordinate Ca(2+). Glu142 is a binding site for Ca(2+).

Belongs to the snaclec family. As to quaternary structure, heterodimer of subunits A and B; disulfide-linked. As to expression, expressed by the venom gland.

Its subcellular location is the secreted. In terms of biological role, inhibits thrombin-induced fibrinogen clotting and factor Xa-induced prothrombin activation. Binds to thrombin and prothrombin exosites. The polypeptide is Snaclec salmorin subunit B (Gloydius brevicauda (Korean slamosa snake)).